We begin with the raw amino-acid sequence, 433 residues long: Enolase (433 aa).

Residues 37-59 (RAAVPSGASTGEHEAVELRDGDK) are disordered. Over residues 47–59 (GEHEAVELRDGDK) the composition is skewed to basic and acidic residues. Q166 provides a ligand contact to (2R)-2-phosphoglycerate. The active-site Proton donor is E208. Residues D245, E291, and D318 each coordinate Mg(2+). Positions 343, 372, 373, and 394 each coordinate (2R)-2-phosphoglycerate. K343 (proton acceptor) is an active-site residue.

The protein belongs to the enolase family. It depends on Mg(2+) as a cofactor.

The protein localises to the cytoplasm. It is found in the secreted. It localises to the cell surface. The enzyme catalyses (2R)-2-phosphoglycerate = phosphoenolpyruvate + H2O. It functions in the pathway carbohydrate degradation; glycolysis; pyruvate from D-glyceraldehyde 3-phosphate: step 4/5. In terms of biological role, catalyzes the reversible conversion of 2-phosphoglycerate (2-PG) into phosphoenolpyruvate (PEP). It is essential for the degradation of carbohydrates via glycolysis. The chain is Enolase from Leptospira biflexa serovar Patoc (strain Patoc 1 / Ames).